Reading from the N-terminus, the 87-residue chain is Alpha-elapitoxin-Ls2a (87 aa).

An N-terminal signal peptide occupies residues Met-1–Thr-21. 5 disulfides stabilise this stretch: Cys-24/Cys-41, Cys-34/Cys-62, Cys-47/Cys-51, Cys-66/Cys-77, and Cys-78/Cys-83.

It belongs to the three-finger toxin family. Long-chain subfamily. Type II alpha-neurotoxin sub-subfamily. As to expression, expressed by the venom gland.

It localises to the secreted. Binds with high affinity to muscular (tested on Torpedo marmorata, Kd=1.6 nM) and neuronal (chimeric alpha-7/CHRNA7, Kd=3 nM) nicotinic acetylcholine receptor (nAChR) and inhibits acetylcholine from binding to the receptor, thereby impairing neuromuscular and neuronal transmission. Also shows a very weak inhibition on GABA(A) receptors. The toxin (10 uM) inhibits 83% of current in channels composed of alpha-1-beta-3-gamma-2 (GABRA1-GABRB3-GABRG2) subunits, 39% of current in channels composed of alpha-2-beta-2-gamma-2 (GABRA2-GABRB2-GABRG2) subunits, and 33% of current in channels composed of alpha-5-beta-2-gamma-2 (GABRA5-GABRB2-GABRG2) subunits. The chain is Alpha-elapitoxin-Ls2a from Laticauda semifasciata (Black-banded sea krait).